Consider the following 196-residue polypeptide: Probable malonic semialdehyde reductase RutE (196 aa).

Belongs to the nitroreductase family. HadB/RutE subfamily. The cofactor is FMN.

It catalyses the reaction 3-hydroxypropanoate + NADP(+) = 3-oxopropanoate + NADPH + H(+). May reduce toxic product malonic semialdehyde to 3-hydroxypropionic acid, which is excreted. The polypeptide is Probable malonic semialdehyde reductase RutE (Klebsiella pneumoniae (strain 342)).